We begin with the raw amino-acid sequence, 450 residues long: Glucose-6-phosphate isomerase (450 aa).

A Phosphothreonine modification is found at threonine 39. Glutamate 291 (proton donor) is an active-site residue. Catalysis depends on residues histidine 312 and lysine 426.

This sequence belongs to the GPI family.

The protein resides in the cytoplasm. The catalysed reaction is alpha-D-glucose 6-phosphate = beta-D-fructose 6-phosphate. It participates in carbohydrate biosynthesis; gluconeogenesis. Its pathway is carbohydrate degradation; glycolysis; D-glyceraldehyde 3-phosphate and glycerone phosphate from D-glucose: step 2/4. Functionally, catalyzes the reversible isomerization of glucose-6-phosphate to fructose-6-phosphate. This is Glucose-6-phosphate isomerase from Halalkalibacterium halodurans (strain ATCC BAA-125 / DSM 18197 / FERM 7344 / JCM 9153 / C-125) (Bacillus halodurans).